The chain runs to 792 residues: Type 2 topoisomerase subunit B (792 aa).

Positions 423 to 537 (CEIFLVEGDS…EGYVYIAEPP (115 aa)) constitute a Toprim domain. Residues Glu429, Asp502, and Asp504 each contribute to the Mg(2+) site.

The protein belongs to the type II topoisomerase GyrB family. In terms of assembly, heterotetramer, composed of two GyrA and two GyrB chains. In the heterotetramer, 'GyrA' contains the active site tyrosine that forms a transient covalent intermediate with DNA, while 'GyrB' binds cofactors and catalyzes ATP hydrolysis. Mg(2+) is required as a cofactor. It depends on Mn(2+) as a cofactor. The cofactor is Ca(2+).

It is found in the cytoplasm. It catalyses the reaction ATP-dependent breakage, passage and rejoining of double-stranded DNA.. Its function is as follows. A type II topoisomerase. Despite its similarity to DNA gyrase, this enzyme is not able to supercoil DNA, and instead acts like topoisomerase IV. Relaxes both positively and negatively supercoiled DNA in an ATP-dependent fashion, decatenates interlocked circles. If this subunit is reconstituted with GyrA from E.coli the hybrid enzyme supercoils relaxed plasmid DNA; if paired with E.coli ParC supercoiling is not restored. This the first bacteria shown to not contain DNA gyrase, although it has 2 copies of a reverse gyrase that introduces positive supercoils. Type II topoisomerases break and join 2 DNA strands simultaneously in an ATP-dependent manner. In Aquifex aeolicus (strain VF5), this protein is Type 2 topoisomerase subunit B.